The chain runs to 289 residues: Phosphatidylserine decarboxylase proenzyme (289 aa).

Residues aspartate 89, histidine 146, and serine 252 each act as charge relay system; for autoendoproteolytic cleavage activity in the active site. Serine 252 functions as the Schiff-base intermediate with substrate; via pyruvic acid; for decarboxylase activity in the catalytic mechanism. Serine 252 carries the pyruvic acid (Ser); by autocatalysis modification.

It belongs to the phosphatidylserine decarboxylase family. PSD-B subfamily. Prokaryotic type I sub-subfamily. As to quaternary structure, heterodimer of a large membrane-associated beta subunit and a small pyruvoyl-containing alpha subunit. Requires pyruvate as cofactor. In terms of processing, is synthesized initially as an inactive proenzyme. Formation of the active enzyme involves a self-maturation process in which the active site pyruvoyl group is generated from an internal serine residue via an autocatalytic post-translational modification. Two non-identical subunits are generated from the proenzyme in this reaction, and the pyruvate is formed at the N-terminus of the alpha chain, which is derived from the carboxyl end of the proenzyme. The autoendoproteolytic cleavage occurs by a canonical serine protease mechanism, in which the side chain hydroxyl group of the serine supplies its oxygen atom to form the C-terminus of the beta chain, while the remainder of the serine residue undergoes an oxidative deamination to produce ammonia and the pyruvoyl prosthetic group on the alpha chain. During this reaction, the Ser that is part of the protease active site of the proenzyme becomes the pyruvoyl prosthetic group, which constitutes an essential element of the active site of the mature decarboxylase.

It is found in the cell membrane. It catalyses the reaction a 1,2-diacyl-sn-glycero-3-phospho-L-serine + H(+) = a 1,2-diacyl-sn-glycero-3-phosphoethanolamine + CO2. The protein operates within phospholipid metabolism; phosphatidylethanolamine biosynthesis; phosphatidylethanolamine from CDP-diacylglycerol: step 2/2. Functionally, catalyzes the formation of phosphatidylethanolamine (PtdEtn) from phosphatidylserine (PtdSer). The sequence is that of Phosphatidylserine decarboxylase proenzyme from Nitrosospira multiformis (strain ATCC 25196 / NCIMB 11849 / C 71).